Consider the following 444-residue polypeptide: F-box protein At1g53790 (444 aa).

In terms of domain architecture, F-box spans 76 to 125; that stretch reads VSCFRYIPIDLLMDIFSRVPAKSIARFRCVSKLWESILCRPDFKELFMTM.

This is F-box protein At1g53790 from Arabidopsis thaliana (Mouse-ear cress).